The primary structure comprises 493 residues: DM7 family protein GM11958 (493 aa).

Positions 434–493 (ATKSTDTRDDGMNTADYQSQFPELEQDSEPEPEPEPEPQTEDEGEDEDIEILASLCSGSI) are disordered. Over residues 457–483 (LEQDSEPEPEPEPEPQTEDEGEDEDIE) the composition is skewed to acidic residues.

Belongs to the DM7 family.

The chain is DM7 family protein GM11958 from Drosophila sechellia (Fruit fly).